Here is a 352-residue protein sequence, read N- to C-terminus: tRNA pseudouridine synthase D (352 aa).

Residue Asp81 is the Nucleophile of the active site. In terms of domain architecture, TRUD spans 158-306 (GVPNYFGQQR…RHERRTLLLK (149 aa)).

It belongs to the pseudouridine synthase TruD family.

The enzyme catalyses uridine(13) in tRNA = pseudouridine(13) in tRNA. Its function is as follows. Responsible for synthesis of pseudouridine from uracil-13 in transfer RNAs. The sequence is that of tRNA pseudouridine synthase D from Photobacterium profundum (strain SS9).